We begin with the raw amino-acid sequence, 2705 residues long: Teneurin-1 (2705 aa).

2 disordered regions span residues 1-73 and 135-222; these read MEQM…STQD and CLSS…TQDS. The Teneurin N-terminal domain maps to 1 to 299; it reads MEQMDCKPYQ…KPYRCCNWKC (299 aa). Residues 1–305 are Cytoplasmic-facing; it reads MEQMDCKPYQ…NWKCTALSAT (305 aa). A compositionally biased stretch (basic and acidic residues) spans 32-46; it reads DGRKQRQSYDSRETL. The Nuclear localization signal (NLS) signature appears at 62–65; sequence RKRK. The span at 135–147 shows a compositional bias: polar residues; the sequence is CLSSRANSALSLT. A compositionally biased stretch (basic and acidic residues) spans 148–157; it reads DTDHERKSDG. The span at 173 to 182 shows a compositional bias: pro residues; the sequence is PLPPPPPPPH. The Required for interaction with SORBS1 (Ten-1 ICD form) motif lies at 271 to 278; that stretch reads PPPRPLPR. A helical transmembrane segment spans residues 306 to 326; it reads AITVTLALLLAYVIAVHLFGL. Residues 327–2705 are Extracellular-facing; that stretch reads TWQLQPVEGQ…FMRQSEIGRR (2379 aa). Asn-414 carries N-linked (GlcNAc...) asparagine glycosylation. EGF-like domains are found at residues 509 to 540, 541 to 572, 573 to 605, 606 to 638, 639 to 672, 673 to 702, 703 to 734, and 735 to 769; these read VLDDCSTNCNGNGECISGHCHCFPGFLGPDCA, KDSCPVLCSGNGEYEKGHCVCRNGWKGPECDV, PEEQCIDPTCFGHGTCIMGVCICVPGYKGEICE, EEDCLDPMCSGHGVCVQGECHCSAGWGGVNCET, SLPICQEHCSGHGTFLLDVGLCSCEPQWTGSDCS, TELCTLDCGSHGVCSRGICQCEEGWVGPTC, EERTCHSHCAEHGQCKDGKCECSPGWEGDHCT, and IDGCPGLCYGNGRCTLDQNGWHCVCQVGWSGSGCN. 22 disulfides stabilise this stretch: Cys-513-Cys-523, Cys-517-Cys-528, Cys-530-Cys-539, Cys-548-Cys-559, Cys-561-Cys-570, Cys-577-Cys-588, Cys-582-Cys-593, Cys-595-Cys-604, Cys-609-Cys-620, Cys-614-Cys-625, Cys-627-Cys-636, Cys-647-Cys-660, Cys-662-Cys-671, Cys-676-Cys-686, Cys-680-Cys-691, Cys-693-Cys-702, Cys-707-Cys-717, Cys-711-Cys-722, Cys-724-Cys-733, Cys-738-Cys-748, Cys-742-Cys-757, and Cys-759-Cys-768. N-linked (GlcNAc...) asparagine glycosylation is found at Asn-878 and Asn-1057. NHL repeat units lie at residues 1167–1192, 1202–1246, 1272–1316, 1331–1382, and 1461–1504; these read LFAPVALTSGPDGSVYIGDFNFVRRI, LELR…AKSL, SHCG…NGMI, LSCD…IAGR, and CFSG…VSRN. One copy of the YD 1 repeat lies at 1514–1533; that stretch reads YEIASPADQELYQFTINGTH. N-linked (GlcNAc...) asparagine glycans are attached at residues Asn-1530 and Asn-1547. YD repeat units follow at residues 1550–1570, 1588–1612, 1613–1634, and 1635–1655; these read YSGEGDVATITSSNGNSVHIR, YWLTISSNGVLKRVYAQGYNLALMT, YPGNTGLLATKSDENGWTTVYE, and YDSDGHLTNATFPTGEVSSFH. N-linked (GlcNAc...) asparagine glycosylation is found at Asn-1643, Asn-1679, Asn-1737, Asn-1761, and Asn-1822. YD repeat units follow at residues 1825 to 1844, 1845 to 1865, 1866 to 1884, 1885 to 1905, 1913 to 1929, 1930 to 1949, 1950 to 1969, 1972 to 1992, 1995 to 2015, 2065 to 2085, and 2093 to 2113; these read YSHSGLVTYIQRGTWTEKME, YDPSGNIISRTWADGKIWSYT, YLEKSVMLLLHSQRRYIFE, YDQSDYLLSVTMPSMVRHALQ, YRNIYTPPDSGAAFIQD, VTRDGRLLQTLYPGTGRRVL, YKYSKQSRLSEILYDTTQVT, YEESSGVIKTIHLMHDGFICT, YRQTGPLIGRQIFRFSEEGLV, YDLNQVITTTVMKHTKIFSAN, and YEILKSIAYWMTIQYDNMGRM. Asn-2125 is a glycosylation site (N-linked (GlcNAc...) asparagine). YD repeat units follow at residues 2133–2153, 2154–2174, 2176–2196, 2208–2228, and 2230–2250; these read YDRDGQLQTVSVNDKTQWRYS, YDLNGNINLLSHGNSARLTPL, YDLRDRITRLGEIQYKMDEDG, YNSNGLLNKAYNKVSGWTVQY, and YDGLGRRVASKSSLGQHLQFF. Asn-2265 carries N-linked (GlcNAc...) asparagine glycosylation. YD repeat units lie at residues 2276-2293 and 2294-2317; these read YDLQGHLIAMELSSGEEY and YVACDNTGTPLAVFSSRGQVIKEI. Residue Asn-2582 is glycosylated (N-linked (GlcNAc...) asparagine).

Belongs to the tenascin family. Teneurin subfamily. As to quaternary structure, homodimer; disulfide-linked. Heterodimer with other teneurins. Ten-1 ICD interacts with SORBS1 (via third SH3 domain). Interacts with MBD1 isoform 2. Post-translationally, derives from the plasma membrane form by proteolytic processing. Further proteolytic cleavage may be generated. Derives from the plasma membrane form by proteolytic cleavage and translocates to the nucleus. As to expression, expressed in the neurons of the developing visual system and in fetal brain.

The protein resides in the cell membrane. It is found in the nucleus. Its subcellular location is the nucleus speckle. It localises to the nucleus matrix. The protein localises to the cytoplasm. The protein resides in the cytoskeleton. Involved in neural development, regulating the establishment of proper connectivity within the nervous system. May function as a cellular signal transducer. In terms of biological role, plays a role in the regulation of neuroplasticity in the limbic system. Mediates a rapid reorganization of actin- and tubulin-based cytoskeleton elements with an increase in dendritic arborization and spine density formation of neurons in the hippocampus and amygdala. Induces BDNF transcription inhibition in neurons. Activates the mitogen-activated protein (MAP) kinase 2 (MEK2) and extracellular signal-regulated kinase (ERK) cascade. Functionally, induces gene transcription activation. The protein is Teneurin-1 (TENM1) of Gallus gallus (Chicken).